The following is a 65-amino-acid chain: MSDTCGNCDCADKTQCVKKGSSYTADIIETEKSIMTVVMDAPAAENDGKCKCGPSCSCTNCTCGH.

It belongs to the metallothionein superfamily. Type 15 family.

Its function is as follows. Metallothioneins have a high content of cysteine residues that bind various heavy metals. The protein is Metallothionein-like protein type 3 of Carica papaya (Papaya).